The following is a 61-amino-acid chain: UPF0391 membrane protein Bpro_0066 (61 aa).

Transmembrane regions (helical) follow at residues 5-25 (AIIFAVISLIAGALGFGGVAA) and 33-53 (ILFGLFLILAVIFVVLAALGV).

Belongs to the UPF0391 family.

The protein localises to the cell membrane. This Polaromonas sp. (strain JS666 / ATCC BAA-500) protein is UPF0391 membrane protein Bpro_0066.